Here is a 319-residue protein sequence, read N- to C-terminus: Acetyl-coenzyme A carboxylase carboxyl transferase subunit beta (319 aa).

The CoA carboxyltransferase N-terminal domain occupies 24 to 293 (LWIKCPDTGQ…MIEQEPEPSA (270 aa)). A disordered region spans residues 282–319 (PEMIEQEPEPSAPVPPDEPDEPAATQEAPPAAPAAPPA).

This sequence belongs to the AccD/PCCB family. In terms of assembly, acetyl-CoA carboxylase is a heterohexamer composed of biotin carboxyl carrier protein (AccB), biotin carboxylase (AccC) and two subunits each of ACCase subunit alpha (AccA) and ACCase subunit beta (AccD).

It is found in the cytoplasm. The enzyme catalyses N(6)-carboxybiotinyl-L-lysyl-[protein] + acetyl-CoA = N(6)-biotinyl-L-lysyl-[protein] + malonyl-CoA. Its pathway is lipid metabolism; malonyl-CoA biosynthesis; malonyl-CoA from acetyl-CoA: step 1/1. In terms of biological role, component of the acetyl coenzyme A carboxylase (ACC) complex. Biotin carboxylase (BC) catalyzes the carboxylation of biotin on its carrier protein (BCCP) and then the CO(2) group is transferred by the transcarboxylase to acetyl-CoA to form malonyl-CoA. This chain is Acetyl-coenzyme A carboxylase carboxyl transferase subunit beta, found in Nitrobacter winogradskyi (strain ATCC 25391 / DSM 10237 / CIP 104748 / NCIMB 11846 / Nb-255).